The sequence spans 68 residues: Protein transport protein Sec61 subunit gamma (68 aa).

N-acetylmethionine is present on methionine 1. The Cytoplasmic portion of the chain corresponds to 1–32 (MDQVMQFVEPSRQFVKDSIRLVKRCTKPDRKE). Serine 18 carries the post-translational modification Phosphoserine. A helical membrane pass occupies residues 33–61 (FQKIAMATAIGFAIMGFIGFFVKLIHIPI). At 62–68 (NNIIVGG) the chain is on the extracellular side.

The protein belongs to the SecE/SEC61-gamma family. The SEC61 channel-forming translocon complex consists of channel-forming core components SEC61A1, SEC61B and SEC61G and different auxiliary components such as SEC62 and SEC63. The SEC61 channel associates with the multi-pass translocon (MPT) complex.

It localises to the endoplasmic reticulum membrane. In terms of biological role, component of SEC61 channel-forming translocon complex that mediates transport of signal peptide-containing precursor polypeptides across the endoplasmic reticulum (ER). Forms a ribosome receptor and a gated pore in the ER membrane, both functions required for cotranslational translocation of nascent polypeptides. The SEC61 channel is also involved in ER membrane insertion of transmembrane proteins: it mediates membrane insertion of the first few transmembrane segments of proteins, while insertion of subsequent transmembrane regions of multi-pass membrane proteins is mediated by the multi-pass translocon (MPT) complex. The SEC61 channel cooperates with the translocating protein TRAM1 to import nascent proteins into the ER. The sequence is that of Protein transport protein Sec61 subunit gamma (SEC61G) from Bos taurus (Bovine).